Consider the following 222-residue polypeptide: Peroxiredoxin (222 aa).

Residues 7 to 163 form the Thioredoxin domain; that stretch reads PRLGEPAPAF…VIRLVDALQT (157 aa). The Cysteine sulfenic acid (-SOH) intermediate role is filled by Cys-49. Substrate is bound at residue Arg-126. Cys-212 and Cys-218 form a disulfide bridge.

It belongs to the peroxiredoxin family. Prx6 subfamily. As to quaternary structure, homodecamer. Pentamer of dimers that assemble into a ring structure.

It localises to the cytoplasm. The catalysed reaction is a hydroperoxide + [thioredoxin]-dithiol = an alcohol + [thioredoxin]-disulfide + H2O. Thiol-specific peroxidase that catalyzes the reduction of hydrogen peroxide and organic hydroperoxides to water and alcohols, respectively. Plays a role in cell protection against oxidative stress by detoxifying peroxides. This is Peroxiredoxin from Aquifex aeolicus (strain VF5).